We begin with the raw amino-acid sequence, 160 residues long: Cytochrome b6-f complex subunit 4 (160 aa).

3 helical membrane-spanning segments follow: residues 36 to 56, 95 to 115, and 131 to 151; these read LLYI…GLAV, LLGV…PFLE, and TVFL…TLPI.

Belongs to the cytochrome b family. PetD subfamily. The 4 large subunits of the cytochrome b6-f complex are cytochrome b6, subunit IV (17 kDa polypeptide, petD), cytochrome f and the Rieske protein, while the 4 small subunits are petG, petL, petM and petN. The complex functions as a dimer.

It localises to the plastid. It is found in the chloroplast thylakoid membrane. In terms of biological role, component of the cytochrome b6-f complex, which mediates electron transfer between photosystem II (PSII) and photosystem I (PSI), cyclic electron flow around PSI, and state transitions. The polypeptide is Cytochrome b6-f complex subunit 4 (Pisum sativum (Garden pea)).